The following is a 140-amino-acid chain: Protein archease (140 aa).

Ca(2+) contacts are provided by D11, D139, and L140.

This sequence belongs to the archease family.

Functionally, activates the tRNA-splicing ligase complex by facilitating the enzymatic turnover of catalytic subunit RtcB. Acts by promoting the guanylylation of RtcB, a key intermediate step in tRNA ligation. Can also alter the NTP specificity of RtcB such that ATP, dGTP or ITP is used efficiently. This Methanopyrus kandleri (strain AV19 / DSM 6324 / JCM 9639 / NBRC 100938) protein is Protein archease.